Here is a 531-residue protein sequence, read N- to C-terminus: T-complex protein 1 subunit zeta (531 aa).

The residue at position 2 (Ala-2) is an N-acetylalanine. The residue at position 5 (Lys-5) is an N6-acetyllysine. Gly-39 provides a ligand contact to ADP. Residue Gly-39 participates in ATP binding. Asp-90 lines the Mg(2+) pocket. ADP is bound by residues Gly-91, Thr-92, Thr-93, Ser-94, Thr-158, and Lys-159. Residues Gly-91, Thr-92, and Thr-93 each contribute to the ATP site. Lys-199 is modified (N6-acetyllysine). Ser-205 is modified (phosphoserine). Lys-251 is covalently cross-linked (Glycyl lysine isopeptide (Lys-Gly) (interchain with G-Cter in SUMO2)). N6-acetyllysine is present on residues Lys-287, Lys-365, Lys-377, and Lys-388. Ala-411 contacts ADP. ATP contacts are provided by Ala-411, Gly-412, Asp-496, and Lys-501. Asp-496 lines the ADP pocket.

It belongs to the TCP-1 chaperonin family. Component of the chaperonin-containing T-complex (TRiC), a hexadecamer composed of two identical back-to-back stacked rings enclosing a protein folding chamber. Each ring is made up of eight different subunits: TCP1/CCT1, CCT2, CCT3, CCT4, CCT5, CCT6A/CCT6, CCT7, CCT8. Interacts with PACRG.

It localises to the cytoplasm. It carries out the reaction ATP + H2O = ADP + phosphate + H(+). Functionally, component of the chaperonin-containing T-complex (TRiC), a molecular chaperone complex that assists the folding of actin, tubulin and other proteins upon ATP hydrolysis. The TRiC complex mediates the folding of WRAP53/TCAB1, thereby regulating telomere maintenance. This is T-complex protein 1 subunit zeta (CCT6) from Pongo abelii (Sumatran orangutan).